Here is a 309-residue protein sequence, read N- to C-terminus: Tagatose-6-phosphate kinase (309 aa).

Belongs to the carbohydrate kinase PfkB family. LacC subfamily.

It catalyses the reaction D-tagatofuranose 6-phosphate + ATP = D-tagatofuranose 1,6-bisphosphate + ADP + H(+). It functions in the pathway carbohydrate metabolism; D-tagatose 6-phosphate degradation; D-glyceraldehyde 3-phosphate and glycerone phosphate from D-tagatose 6-phosphate: step 1/2. This is Tagatose-6-phosphate kinase from Streptococcus pyogenes serotype M6 (strain ATCC BAA-946 / MGAS10394).